Here is a 1135-residue protein sequence, read N- to C-terminus: Nonribosomal peptide synthetase 9 (1135 aa).

Positions threonine 23–proline 77 are condensation 1. The adenylation stretch occupies residues serine 177–threonine 562. The interval glycine 485–serine 507 is disordered. Over residues glycine 491 to arginine 502 the composition is skewed to low complexity. Residues alanine 672 to glutamine 748 form the Carrier domain. An O-(pantetheine 4'-phosphoryl)serine modification is found at serine 709. The segment at aspartate 746–valine 999 is condensation 2.

Belongs to the NRP synthetase family.

Functionally, nonribosomal peptide synthesis (NRPS) is a key mechanism responsible for the biosynthesis of bioactive metabolites which are potentially contributing to organismal virulence. This chain is Nonribosomal peptide synthetase 9 (NRPS9), found in Aspergillus fumigatus (strain ATCC MYA-4609 / CBS 101355 / FGSC A1100 / Af293) (Neosartorya fumigata).